The primary structure comprises 364 residues: Methylenetetrahydrofolate--tRNA-(uracil-5-)-methyltransferase TrmFO (364 aa).

11–16 is a binding site for FAD; sequence GAGLAG. Residues 335–352 are compositionally biased toward polar residues; that stretch reads SYLNQPCSSANDPTSSLL. The tract at residues 335–364 is disordered; sequence SYLNQPCSSANDPTSSLLDRSPAQRDIPLQ.

Belongs to the MnmG family. TrmFO subfamily. It depends on FAD as a cofactor.

Its subcellular location is the cytoplasm. The catalysed reaction is uridine(54) in tRNA + (6R)-5,10-methylene-5,6,7,8-tetrahydrofolate + NADH + H(+) = 5-methyluridine(54) in tRNA + (6S)-5,6,7,8-tetrahydrofolate + NAD(+). It catalyses the reaction uridine(54) in tRNA + (6R)-5,10-methylene-5,6,7,8-tetrahydrofolate + NADPH + H(+) = 5-methyluridine(54) in tRNA + (6S)-5,6,7,8-tetrahydrofolate + NADP(+). In terms of biological role, catalyzes the folate-dependent formation of 5-methyl-uridine at position 54 (M-5-U54) in all tRNAs. This is Methylenetetrahydrofolate--tRNA-(uracil-5-)-methyltransferase TrmFO from Prochlorococcus marinus (strain MIT 9313).